Here is a 412-residue protein sequence, read N- to C-terminus: Tyrosine--tRNA ligase (412 aa).

Tyrosine 31 provides a ligand contact to L-tyrosine. The short motif at 36–45 (PTAASLHIGH) is the 'HIGH' region element. Residues tyrosine 162 and glutamine 166 each coordinate L-tyrosine. Residues 222-226 (KIGKT) carry the 'KMSKS' region motif. Lysine 225 provides a ligand contact to ATP. Residues 345 to 412 (KRWIDLFVGV…KKKKLVLHLI (68 aa)) form the S4 RNA-binding domain.

Belongs to the class-I aminoacyl-tRNA synthetase family. TyrS type 1 subfamily. Homodimer.

The protein resides in the cytoplasm. It catalyses the reaction tRNA(Tyr) + L-tyrosine + ATP = L-tyrosyl-tRNA(Tyr) + AMP + diphosphate + H(+). Functionally, catalyzes the attachment of tyrosine to tRNA(Tyr) in a two-step reaction: tyrosine is first activated by ATP to form Tyr-AMP and then transferred to the acceptor end of tRNA(Tyr). The sequence is that of Tyrosine--tRNA ligase from Chlamydia caviae (strain ATCC VR-813 / DSM 19441 / 03DC25 / GPIC) (Chlamydophila caviae).